The primary structure comprises 415 residues: Probable glucan 1,3-beta-glucosidase A (415 aa).

The first 22 residues, 1 to 22 (MLSRLSQTALVALSLMTVLTEA), serve as a signal peptide directing secretion. The Proton donor role is filled by Glu210. Cystine bridges form between Cys290/Cys414 and Cys315/Cys341. The active-site Nucleophile is Glu307. Positions 335–359 (SPRYGDCGNKRQGSSSGLSEQERSD) are disordered.

It belongs to the glycosyl hydrolase 5 (cellulase A) family. As to quaternary structure, monomer. It depends on Mn(2+) as a cofactor.

It localises to the secreted. It catalyses the reaction Successive hydrolysis of beta-D-glucose units from the non-reducing ends of (1-&gt;3)-beta-D-glucans, releasing alpha-glucose.. Its function is as follows. Beta-glucanases participate in the metabolism of beta-glucan, the main structural component of the cell wall. It could also function biosynthetically as a transglycosylase. This Aspergillus clavatus (strain ATCC 1007 / CBS 513.65 / DSM 816 / NCTC 3887 / NRRL 1 / QM 1276 / 107) protein is Probable glucan 1,3-beta-glucosidase A (exgA).